Here is a 583-residue protein sequence, read N- to C-terminus: MTKKNAFKNSEDMKKYHLSEFNSEATSLTRPSPKSLQHVPCKFFRQGTCTSGKNCIFSHDLELATEKTICKYFQKGNCKFGSKCALEHVLPDGRKVKTRAFAPSTTAMGSSSQNISAAPMANIISNNDKILPMTTMASATASEEKNRIKDEALVIKKEESNVAIPSEVTVAANAFSASTEDVYSIVGDSLSKKASVKDFSDVTGIETIPAYVEATNGSSTVRSPHAKRSLSSISVKSSTSPFSGSKFLSSSSYPHTPEAHLNSNHISPASFGSGIRTRNIFNPESMSLGLKPPILNRSYSASMAPGFSMNTFTATGNLGRPTKSPSVPTSVGSNKSRKFPGINGSTLTATPSSLENLYPLSSRRSVPNLISSLGTSPSTFSSQFLKSTDRTHSFTSKLQSFNPVGTSLLASSLGTSQEDSVNYDIPDEFANEEDFIPNSLQELLTPEELERKMSHGDEAVSSSSASRFMSKVSSNLNSGNPTPYNSYNGTPTSSRFVAFFDRHRQESEKATPPSLNKVSQEPLTATTPKNLGNLTAISETLENGQTLKSNMASSIEKSKTSTEVVASYDTTLDEETQFQMDEA.

2 C3H1-type zinc fingers span residues 35–62 (SLQHVPCKFFRQGTCTSGKNCIFSHDLE) and 64–91 (ATEKTICKYFQKGNCKFGSKCALEHVLP). Disordered stretches follow at residues 318–346 (LGRPTKSPSVPTSVGSNKSRKFPGINGST), 471–490 (KVSSNLNSGNPTPYNSYNGT), and 504–532 (RQESEKATPPSLNKVSQEPLTATTPKNLG). 3 stretches are compositionally biased toward polar residues: residues 323-334 (KSPSVPTSVGSN), 475-490 (NLNSGNPTPYNSYNGT), and 513-532 (PSLNKVSQEPLTATTPKNLG).

It localises to the cytoplasm. Functionally, responsible for supersensitivity to the spindle poison, isopropyl N-3-chlorophenyl carbamate. Has a role in meiosis. The polypeptide is Protein cps3 (cps3) (Schizosaccharomyces pombe (strain 972 / ATCC 24843) (Fission yeast)).